A 340-amino-acid chain; its full sequence is CMP-sialic acid transporter 1 (340 aa).

Topologically, residues 1–5 (MAATP) are cytoplasmic. Residues 6-26 (WYFVAVLLTILTSSQGILTTL) traverse the membrane as a helical segment. Residues 27 to 36 (SQSDGGYKYD) lie on the Lumenal side of the membrane. The chain crosses the membrane as a helical span at residues 37–57 (YATVPFLAEVFKLIISGLFLW). Residues 58–78 (REMRTSSSTTSRITTDWKSVR) lie on the Cytoplasmic side of the membrane. A helical transmembrane segment spans residues 79–99 (LFVIPSLIYLIHNNVQFATLT). The Lumenal portion of the chain corresponds to 100–102 (YVD). The helical transmembrane segment at 103–125 (TSTYQIMGNLKIVTTGILFRLFL) threads the bilayer. At 126–168 (KRKLSKLQWMAIGLLAVGTTTSQVKGCGEASCDSLFTAPIQGY) the chain is on the cytoplasmic side. A helical membrane pass occupies residues 169-189 (LLGILSAGLSALAGIYTEFLM). The Lumenal portion of the chain corresponds to 190–200 (KRNNDTLYWQN). The chain crosses the membrane as a helical span at residues 201–217 (LQLYTFGSLFNVARLIA). The Cytoplasmic portion of the chain corresponds to 218–238 (DDFRHGFEKGPWWQRIFDGYS). Residues 239–259 (ITTWLVVLNLGSTGLLVSWLM) form a helical membrane-spanning segment. The Lumenal segment spans residues 260–282 (KYADNIVKVYSTSMAMLLTMVAS). A helical transmembrane segment spans residues 283–303 (IYLFSFKPTLQLFLGIVICIM). The Cytoplasmic segment spans residues 304-340 (SLHMYFAPPHTLVDLPVTNEAHAKTLKQVVVEEKTDS).

Belongs to the nucleotide-sugar transporter family. CMP-Sialate:CMP antiporter (TC 2.A.7.12) subfamily.

The protein resides in the golgi apparatus membrane. Functionally, essential protein. Sugar transporter involved in the transport of CMP-sialic acid from the cytoplasm into the Golgi. The chain is CMP-sialic acid transporter 1 from Arabidopsis thaliana (Mouse-ear cress).